The primary structure comprises 308 residues: 4-hydroxyproline 2-epimerase (308 aa).

The active-site Proton acceptor is cysteine 88. Substrate contacts are provided by residues glycine 89 to histidine 90, histidine 208, and aspartate 232. Cysteine 236 serves as the catalytic Proton donor. Position 237-238 (glycine 237–threonine 238) interacts with substrate.

This sequence belongs to the proline racemase family.

It catalyses the reaction trans-4-hydroxy-L-proline = cis-4-hydroxy-D-proline. Its function is as follows. Catalyzes the reversible epimerization of cis-4-hydroxy-D-proline (c4DHyp) to trans-4-hydroxy-L-proline (t4LHyp). May be involved in a degradation pathway that allows P.putida strain KT2440 to grow on either epimer of 4-hydroxyproline, c4DHyp and t4LHyp, as the sole carbon and nitrogen source. Does not exhibit measureable racemase activity in vitro with any of the 19 natural chiral amino acid enantiomers. The polypeptide is 4-hydroxyproline 2-epimerase (Pseudomonas putida (strain ATCC 47054 / DSM 6125 / CFBP 8728 / NCIMB 11950 / KT2440)).